A 146-amino-acid polypeptide reads, in one-letter code: Gene 19.2 protein (146 aa).

The protein is Gene 19.2 protein (19.2) of Escherichia coli (Bacteriophage T3).